A 499-amino-acid chain; its full sequence is Phenylalanine--tRNA ligase alpha subunit (499 aa).

L-phenylalanine contacts are provided by residues Thr-342, 381 to 383 (QID), and Phe-422. Glu-424 is a Mg(2+) binding site. L-phenylalanine is bound at residue Phe-447.

This sequence belongs to the class-II aminoacyl-tRNA synthetase family. Phe-tRNA synthetase alpha subunit type 2 subfamily. In terms of assembly, tetramer of two alpha and two beta subunits. It depends on Mg(2+) as a cofactor.

Its subcellular location is the cytoplasm. The enzyme catalyses tRNA(Phe) + L-phenylalanine + ATP = L-phenylalanyl-tRNA(Phe) + AMP + diphosphate + H(+). The chain is Phenylalanine--tRNA ligase alpha subunit from Thermococcus gammatolerans (strain DSM 15229 / JCM 11827 / EJ3).